We begin with the raw amino-acid sequence, 163 residues long: ATP synthase subunit b', chloroplastic (163 aa).

A helical membrane pass occupies residues 26-46 (ATLPLMAVQILLFMVILNAVF).

It belongs to the ATPase B chain family. F-type ATPases have 2 components, F(1) - the catalytic core - and F(0) - the membrane proton channel. F(1) has five subunits: alpha(3), beta(3), gamma(1), delta(1), epsilon(1). F(0) has four main subunits: a(1), b(1), b'(1) and c(10-14). The alpha and beta chains form an alternating ring which encloses part of the gamma chain. F(1) is attached to F(0) by a central stalk formed by the gamma and epsilon chains, while a peripheral stalk is formed by the delta, b and b' chains.

The protein localises to the plastid. The protein resides in the chloroplast thylakoid membrane. F(1)F(0) ATP synthase produces ATP from ADP in the presence of a proton or sodium gradient. F-type ATPases consist of two structural domains, F(1) containing the extramembraneous catalytic core and F(0) containing the membrane proton channel, linked together by a central stalk and a peripheral stalk. During catalysis, ATP synthesis in the catalytic domain of F(1) is coupled via a rotary mechanism of the central stalk subunits to proton translocation. Its function is as follows. Component of the F(0) channel, it forms part of the peripheral stalk, linking F(1) to F(0). The b'-subunit is a diverged and duplicated form of b found in plants and photosynthetic bacteria. This chain is ATP synthase subunit b', chloroplastic, found in Guillardia theta (Cryptophyte).